The primary structure comprises 126 residues: Fluoride-specific ion channel FluC (126 aa).

4 helical membrane passes run 5 to 25 (GFVAVGVGAAVGAWLRWFFSV), 36 to 56 (YGTLASNLVGGYLIGLAVAFF), 69 to 89 (LAVTGFLGGLTTFSTFSSEVI), and 99 to 119 (WAMLHLAMHLGGSLLLTAFGI). The Na(+) site is built by G76 and T79.

It belongs to the fluoride channel Fluc/FEX (TC 1.A.43) family.

Its subcellular location is the cell inner membrane. The catalysed reaction is fluoride(in) = fluoride(out). With respect to regulation, na(+) is not transported, but it plays an essential structural role and its presence is essential for fluoride channel function. Functionally, fluoride-specific ion channel. Important for reducing fluoride concentration in the cell, thus reducing its toxicity. The sequence is that of Fluoride-specific ion channel FluC from Cupriavidus metallidurans (strain ATCC 43123 / DSM 2839 / NBRC 102507 / CH34) (Ralstonia metallidurans).